The following is a 127-amino-acid chain: Large ribosomal subunit protein bL12 (127 aa).

A disordered region spans residues 96 to 127; it reads GTPSTLKEAVSKDDAEEAAKQLKEAGAEVEVK. Positions 104 to 127 are enriched in basic and acidic residues; sequence AVSKDDAEEAAKQLKEAGAEVEVK.

Belongs to the bacterial ribosomal protein bL12 family. As to quaternary structure, homodimer. Part of the ribosomal stalk of the 50S ribosomal subunit. Forms a multimeric L10(L12)X complex, where L10 forms an elongated spine to which 2 to 4 L12 dimers bind in a sequential fashion. Binds GTP-bound translation factors.

Functionally, forms part of the ribosomal stalk which helps the ribosome interact with GTP-bound translation factors. Is thus essential for accurate translation. The chain is Large ribosomal subunit protein bL12 from Oleidesulfovibrio alaskensis (strain ATCC BAA-1058 / DSM 17464 / G20) (Desulfovibrio alaskensis).